Consider the following 661-residue polypeptide: Pentatricopeptide repeat-containing protein At5g66631 (661 aa).

PPR repeat units follow at residues 139-173 (VHFS…GEEK), 176-210 (CTES…GGIP), 211-245 (NSRT…RITR), 246-280 (TLKH…GKFP), 410-444 (DAYT…GIKL), 445-475 (PFST…DRTL), 484-518 (LMLL…GVSP), 519-553 (DIQT…GLEP), and 554-588 (DPYM…NLMP).

The protein belongs to the PPR family. P subfamily.

The protein is Pentatricopeptide repeat-containing protein At5g66631 of Arabidopsis thaliana (Mouse-ear cress).